The primary structure comprises 451 residues: Transcription factor TGAL8 (451 aa).

Positions 1 to 22 (MAYPSTSGMIQASSSLHGSITR) are enriched in polar residues. 2 disordered regions span residues 1–32 (MAYP…DMPS) and 70–151 (FPSQ…PKTL). Basic and acidic residues predominate over residues 141–150 (KGPKTPDPKT). In terms of domain architecture, bZIP spans 147–191 (DPKTLRRLAQNREAARKSRLRKKAYIQQLETGRIRLAHLEQEIQF). Positions 149 to 169 (KTLRRLAQNREAARKSRLRKK) are basic motif. A leucine-zipper region spans residues 175 to 189 (LETGRIRLAHLEQEI). The DOG1 domain occupies 208–444 (AALFNLEYER…RALALFWTTT (237 aa)).

This sequence belongs to the bZIP family. Interacts with NPR5/NH4, NH5.1 and NH5.2.

It localises to the nucleus. Its function is as follows. Transcriptional regulator involved in defense response. The sequence is that of Transcription factor TGAL8 from Oryza sativa subsp. japonica (Rice).